The following is a 101-amino-acid chain: Anti-lipopolysaccharide factor (101 aa).

A disulfide bond links Cys-31 and Cys-52.

Its function is as follows. Binds tightly to LPS and thus specifically inhibits the LPS-mediated activation of the hemolymph coagulation. It has a strong antibacterial effect especially on the growth of Gram-negative bacteria. The chain is Anti-lipopolysaccharide factor from Limulus polyphemus (Atlantic horseshoe crab).